Here is a 958-residue protein sequence, read N- to C-terminus: Structure-specific endonuclease subunit SLX4 (958 aa).

Disordered regions lie at residues 89–123 (AESPIKSGVEGPTLPLGGDKKKPRTAGARKKKGKT), 183–209 (QKKAETVSRHFTPHTSAPPELVAGPID), 326–400 (LATA…LSPT), 531–589 (DLTI…EQHQ), 594–613 (QSNTPQQPQPAPPPPPSFEL), and 655–849 (STAA…SPPA). Over residues 109 to 121 (KKPRTAGARKKKG) the composition is skewed to basic residues. Residues 332–341 (RRPEEAERST) are compositionally biased toward basic and acidic residues. Residues 342–351 (LSRQQDTHIP) show a composition bias toward polar residues. Residues 364–373 (AASKSASAKP) show a composition bias toward low complexity. Residues 374-389 (KAAKKAPKPRATKKKQ) show a composition bias toward basic residues. Residues 600–610 (QPQPAPPPPPS) are compositionally biased toward pro residues. Low complexity-rich tracts occupy residues 655–666 (STAAQAAMSTSA), 775–787 (TTSPATRATRAKA), and 821–838 (PDSGSDDPFASSAPSSPD).

It belongs to the SLX4 family. In terms of assembly, forms a heterodimer with SLX1. In terms of processing, phosphorylated in response to DNA damage.

The protein localises to the nucleus. Regulatory subunit of the SLX1-SLX4 structure-specific endonuclease that resolves DNA secondary structures generated during DNA repair and recombination. Has endonuclease activity towards branched DNA substrates, introducing single-strand cuts in duplex DNA close to junctions with ss-DNA. The chain is Structure-specific endonuclease subunit SLX4 from Chaetomium globosum (strain ATCC 6205 / CBS 148.51 / DSM 1962 / NBRC 6347 / NRRL 1970) (Soil fungus).